The primary structure comprises 537 residues: Pentatricopeptide repeat-containing protein At4g32450, mitochondrial (537 aa).

Residues methionine 1–asparagine 110 constitute a mitochondrion transit peptide. Polar residues predominate over residues tryptophan 113 to phenylalanine 140. The tract at residues tryptophan 113–serine 148 is disordered. 6 PPR repeats span residues serine 145–valine 179, aspartate 180–serine 210, aspartate 215–threonine 249, tryptophan 250–proline 280, aspartate 281–proline 316, and cysteine 317–asparagine 347. Residues tyrosine 412 to isoleucine 442 form a type E(+) motif region. Residues glutamate 443 to tryptophan 537 form a type DYW motif region.

Belongs to the PPR family. PCMP-H subfamily.

The protein resides in the mitochondrion. The sequence is that of Pentatricopeptide repeat-containing protein At4g32450, mitochondrial (PCMP-H63) from Arabidopsis thaliana (Mouse-ear cress).